The following is a 143-amino-acid chain: Transcriptional regulator MraZ (143 aa).

SpoVT-AbrB domains are found at residues 5-47 and 76-119; these read TYTP…PREE and TDEQ…DAQA.

This sequence belongs to the MraZ family. Forms oligomers.

The protein localises to the cytoplasm. It is found in the nucleoid. The sequence is that of Transcriptional regulator MraZ from Rhodococcus opacus (strain B4).